The following is a 403-amino-acid chain: Phosphoglycerate kinase (403 aa).

Residues 21–23 (DFN), Arg36, 59–62 (HLGR), Arg119, and Arg154 each bind substrate. Residues Lys207, Gly299, Glu330, and 357 to 360 (GGDA) each bind ATP.

The protein belongs to the phosphoglycerate kinase family. As to quaternary structure, monomer.

The protein localises to the cytoplasm. It catalyses the reaction (2R)-3-phosphoglycerate + ATP = (2R)-3-phospho-glyceroyl phosphate + ADP. It functions in the pathway carbohydrate degradation; glycolysis; pyruvate from D-glyceraldehyde 3-phosphate: step 2/5. In Chlamydia felis (strain Fe/C-56) (Chlamydophila felis), this protein is Phosphoglycerate kinase.